Here is a 420-residue protein sequence, read N- to C-terminus: Tyrosine--tRNA ligase (420 aa).

Tyrosine 36 contributes to the L-tyrosine binding site. Residues 41 to 50 carry the 'HIGH' region motif; it reads PTADSLHIGH. 2 residues coordinate L-tyrosine: tyrosine 170 and glutamine 174. A 'KMSKS' region motif is present at residues 231 to 235; sequence KFGKT. Lysine 234 is an ATP binding site. Residues 353–420 enclose the S4 RNA-binding domain; sequence RNIVEVIVET…KKKYFMVNYK (68 aa).

It belongs to the class-I aminoacyl-tRNA synthetase family. TyrS type 1 subfamily. As to quaternary structure, homodimer.

Its subcellular location is the cytoplasm. It carries out the reaction tRNA(Tyr) + L-tyrosine + ATP = L-tyrosyl-tRNA(Tyr) + AMP + diphosphate + H(+). Functionally, catalyzes the attachment of tyrosine to tRNA(Tyr) in a two-step reaction: tyrosine is first activated by ATP to form Tyr-AMP and then transferred to the acceptor end of tRNA(Tyr). This Staphylococcus saprophyticus subsp. saprophyticus (strain ATCC 15305 / DSM 20229 / NCIMB 8711 / NCTC 7292 / S-41) protein is Tyrosine--tRNA ligase.